The sequence spans 67 residues: DNA-directed RNA polymerase subunit omega (67 aa).

This sequence belongs to the RNA polymerase subunit omega family. The RNAP catalytic core consists of 2 alpha, 1 beta, 1 beta' and 1 omega subunit. When a sigma factor is associated with the core the holoenzyme is formed, which can initiate transcription.

The enzyme catalyses RNA(n) + a ribonucleoside 5'-triphosphate = RNA(n+1) + diphosphate. Its function is as follows. Promotes RNA polymerase assembly. Latches the N- and C-terminal regions of the beta' subunit thereby facilitating its interaction with the beta and alpha subunits. This Listeria innocua serovar 6a (strain ATCC BAA-680 / CLIP 11262) protein is DNA-directed RNA polymerase subunit omega.